The sequence spans 424 residues: Dihydroorotase (424 aa).

2 residues coordinate Zn(2+): H61 and H63. Substrate is bound by residues 63–65 and N95; that span reads HLR. Zn(2+)-binding residues include D153, H180, and H233. N279 lines the substrate pocket. D306 contacts Zn(2+). The active site involves D306. H310 serves as a coordination point for substrate.

The protein belongs to the metallo-dependent hydrolases superfamily. DHOase family. Class I DHOase subfamily. Zn(2+) is required as a cofactor.

It carries out the reaction (S)-dihydroorotate + H2O = N-carbamoyl-L-aspartate + H(+). The protein operates within pyrimidine metabolism; UMP biosynthesis via de novo pathway; (S)-dihydroorotate from bicarbonate: step 3/3. Catalyzes the reversible cyclization of carbamoyl aspartate to dihydroorotate. The protein is Dihydroorotase of Citrifermentans bemidjiense (strain ATCC BAA-1014 / DSM 16622 / JCM 12645 / Bem) (Geobacter bemidjiensis).